We begin with the raw amino-acid sequence, 538 residues long: Acetylcholine receptor subunit alpha-type acr-7 (538 aa).

The first 27 residues, M1–G27, serve as a signal peptide directing secretion. Residues S28–Y250 lie on the Extracellular side of the membrane. 2 N-linked (GlcNAc...) asparagine glycosylation sites follow: N41 and N101. Disulfide bonds link C160–C174 and C229–C230. 3 helical membrane-spanning segments follow: residues V251–L271, I280–M300, and V313–L333. Residues N334 to C513 are Cytoplasmic-facing. The chain crosses the membrane as a helical span at residues L514–I534.

This sequence belongs to the ligand-gated ion channel (TC 1.A.9) family. Acetylcholine receptor (TC 1.A.9.1) subfamily. As to quaternary structure, forms a homooligomeric channel blocked by alpha-bungarotoxin. The structure is probably pentameric.

The protein resides in the postsynaptic cell membrane. It is found in the cell membrane. Functionally, after binding acetylcholine, the AChR responds by an extensive change in conformation that affects all subunits and leads to opening of an ion-conducting channel across the plasma membrane. The protein is Acetylcholine receptor subunit alpha-type acr-7 (acr-7) of Caenorhabditis elegans.